The following is a 323-amino-acid chain: MSNLKQLRTRIKSVKSTQKITKAMQLVSASKMAKIKSQIANSNFYIEAVSKMMSAILSIDMYELSIEEQKFFNTVPNKANLLIVMTSQRGLCGTFNYSIIKQVKNDIKELENKGEQIKLIIIGKKGYEALKRQYVNYIDSYFELPKIHDENLMLQVKQKIMSAVENLEISNCVIYFNKFKNAMTQIMTRQQILPVAKYQDDSMIDNPIVNLVGFGYKERGVKPINNRRATSDIVGESKSIDYNYEYEGASLISNLINLYVNSQINYALLQSRASEEGARMTAMENATNNANDLISKLVLKLNRSRQAIITTELIEIIAGSEAV.

It belongs to the ATPase gamma chain family. As to quaternary structure, F-type ATPases have 2 components, CF(1) - the catalytic core - and CF(0) - the membrane proton channel. CF(1) has five subunits: alpha(3), beta(3), gamma(1), delta(1), epsilon(1). CF(0) has three main subunits: a, b and c.

Its subcellular location is the cell inner membrane. Functionally, produces ATP from ADP in the presence of a proton gradient across the membrane. The gamma chain is believed to be important in regulating ATPase activity and the flow of protons through the CF(0) complex. This Rickettsia africae (strain ESF-5) protein is ATP synthase gamma chain.